We begin with the raw amino-acid sequence, 195 residues long: CASP-like protein 1B1 (195 aa).

Residues 1–22 lie on the Cytoplasmic side of the membrane; the sequence is MGLQNEEKLELGCTGLQPKPKK. The chain crosses the membrane as a helical span at residues 23–43; the sequence is WVLLMVRVVAFLATAAATLVM. Residues 44 to 75 are Extracellular-facing; it reads ALNKETKTLVVATVGNTPIKVTLTAKFQHTPA. A helical transmembrane segment spans residues 76–96; the sequence is FVFFVIANGMASFHNLLMIMV. Residues 97–109 are Cytoplasmic-facing; it reads ELCGQKLDYKGMR. The chain crosses the membrane as a helical span at residues 110–130; the sequence is LAMVAILDMMTVALVSGGASA. At 131 to 163 the chain is on the extracellular side; the sequence is ATFMAELGKNGNSHARWDKICDKFETFCDHGGA. A helical membrane pass occupies residues 164 to 184; sequence ALIASSAGLILMMIISVMSIM. Topologically, residues 185–195 are cytoplasmic; it reads KLLIKPKSDSS.

This sequence belongs to the Casparian strip membrane proteins (CASP) family. As to quaternary structure, homodimer and heterodimers.

It localises to the cell membrane. The chain is CASP-like protein 1B1 from Populus trichocarpa (Western balsam poplar).